The sequence spans 154 residues: Protein X (154 aa).

The interval 68–117 (PCALRFTFARRMETTVNAHQVLPKVLHKRTLGLSAMSTTDLEAYFKDCVF) is mitochondrial targeting sequence.

The protein belongs to the orthohepadnavirus protein X family. May form homodimer. May interact with host CEBPA, CFLAR, CREB1, DDB1, E4F1, HBXIP, HSPD1/HSP60, NFKBIA, POLR2E and SMAD4. Interacts with host SMC5-SMC6 complex and induces its degradation. Interacts with host TRPC4AP; leading to prevent ubiquitination of TRPC4AP. Interacts with host PLSCR1; this interaction promotes ubiquitination and degradation of HBx and impairs HBx-mediated cell proliferation. Post-translationally, a fraction may be phosphorylated in insect cells and HepG2 cells, a human hepatoblastoma cell line. Phosphorylated in vitro by host protein kinase C or mitogen-activated protein kinase. N-acetylated in insect cells.

The protein localises to the host cytoplasm. It localises to the host nucleus. The protein resides in the host mitochondrion. In terms of biological role, multifunctional protein that plays a role in silencing host antiviral defenses and promoting viral transcription. Does not seem to be essential for HBV infection. May be directly involved in development of cirrhosis and liver cancer (hepatocellular carcinoma). Most of cytosolic activities involve modulation of cytosolic calcium. The effect on apoptosis is controversial depending on the cell types in which the studies have been conducted. May induce apoptosis by localizing in mitochondria and causing loss of mitochondrial membrane potential. May also modulate apoptosis by binding host CFLAR, a key regulator of the death-inducing signaling complex (DISC). Promotes viral transcription by using the host E3 ubiquitin ligase DDB1 to target the SMC5-SMC6 complex to proteasomal degradation. This host complex would otherwise bind to viral episomal DNA, and prevents its transcription. Moderately stimulates transcription of many different viral and cellular transcription elements. Promoters and enhancers stimulated by HBx contain DNA binding sites for NF-kappa-B, AP-1, AP-2, c-EBP, ATF/CREB, or the calcium-activated factor NF-AT. This is Protein X from Hepatitis B virus genotype C subtype ayw (isolate China/Tibet127/2002) (HBV-C).